Here is a 130-residue protein sequence, read N- to C-terminus: Gonadotropin subunit beta-1 (130 aa).

The first 18 residues, 1–18, serve as a signal peptide directing secretion; sequence MRMRFVVMVILLPALMMS. Cystine bridges form between Cys-26-Cys-74, Cys-40-Cys-89, Cys-51-Cys-105, Cys-55-Cys-107, and Cys-110-Cys-117. N-linked (GlcNAc...) asparagine glycosylation is present at Asn-30.

This sequence belongs to the glycoprotein hormones subunit beta family. As to quaternary structure, heterodimer of an alpha and a beta chain.

It localises to the secreted. Involved in gametogenesis and steroidogenesis. In Carassius auratus (Goldfish), this protein is Gonadotropin subunit beta-1 (cgba).